The chain runs to 438 residues: MSAESLLHNTFSTEQIEVLENEYAAHNYHPLPVCFSKAKGAKVWDPEGREYLDFLSAYSAVNQGHCHPKIIEALVEQAQRVTLSSRAFYNDKFGPFAKYITEYFGYEMVIPMNTGAEAVETACKLARLWGYKAKKIPTDEAIILSCVDNFHGRTMGIISMSTDPDARDNYGPYLPNVGPKISGADRVLRYNNIEDLKYYLDTFGPKVAAFLVEPIQGEAGVMVPDDGYLEEAYKLCKAHNVLFIADEVQTGVARTGKMLCIEHSNVKPDVVILGKAISGGVYPVSAVLSSREIMLNFEPGTHGSTYGGNPLGAAVSIAALEVVKEEKLTERAAVLGEKFRTALIECKSPIVQKVRGRGLLNAVVIDESKTNGRTAWDLCLIMRSRGVLAKPTHGNIIRFSPPLVITEEDLMKGIEVIKKSLNDLPTIDMTPYAEKPIH.

An N6-(pyridoxal phosphate)lysine modification is found at Lys275.

Belongs to the class-III pyridoxal-phosphate-dependent aminotransferase family. Pyridoxal 5'-phosphate is required as a cofactor.

The protein localises to the cytoplasm. It is found in the nucleus. It catalyses the reaction a 2-oxocarboxylate + L-ornithine = L-glutamate 5-semialdehyde + an L-alpha-amino acid. Its pathway is amino-acid biosynthesis; L-proline biosynthesis; L-glutamate 5-semialdehyde from L-ornithine: step 1/1. This Schizosaccharomyces pombe (strain 972 / ATCC 24843) (Fission yeast) protein is Ornithine aminotransferase car2 (car2).